A 141-amino-acid polypeptide reads, in one-letter code: MAIERTLSIVKPDAVAKNVIGKIYDRFESAGLKIVAAKMKQLSRAEAEGFYAVHKERPFFKDLVDFMVSGPVMIQALEGENAVLKNRELMGATDPKKAEAGTIRADFAESIDANAVHGSDSVENAAIEVAYFFAASEISSR.

6 residues coordinate ATP: K11, F59, R87, T93, R104, and N114. The active-site Pros-phosphohistidine intermediate is H117.

It belongs to the NDK family. Homotetramer. It depends on Mg(2+) as a cofactor.

The protein localises to the cytoplasm. The catalysed reaction is a 2'-deoxyribonucleoside 5'-diphosphate + ATP = a 2'-deoxyribonucleoside 5'-triphosphate + ADP. The enzyme catalyses a ribonucleoside 5'-diphosphate + ATP = a ribonucleoside 5'-triphosphate + ADP. Its function is as follows. Major role in the synthesis of nucleoside triphosphates other than ATP. The ATP gamma phosphate is transferred to the NDP beta phosphate via a ping-pong mechanism, using a phosphorylated active-site intermediate. The polypeptide is Nucleoside diphosphate kinase (Chromobacterium violaceum (strain ATCC 12472 / DSM 30191 / JCM 1249 / CCUG 213 / NBRC 12614 / NCIMB 9131 / NCTC 9757 / MK)).